Here is a 343-residue protein sequence, read N- to C-terminus: Mediator of RNA polymerase II transcription subunit 2 (343 aa).

2 disordered regions span residues 105–141 and 252–277; these read KQQQ…AQQL and STNE…ISSN. Basic and acidic residues predominate over residues 107–132; it reads QQEEEQRRKHQAELEKNKRQQEHDAA. Polar residues predominate over residues 252 to 264; that stretch reads STNEASTNNRNND.

This sequence belongs to the Mediator complex subunit 2 family. As to quaternary structure, component of the Mediator complex.

Its subcellular location is the nucleus. Functionally, component of the Mediator complex, a coactivator involved in the regulated transcription of nearly all RNA polymerase II-dependent genes. Mediator functions as a bridge to convey information from gene-specific regulatory proteins to the basal RNA polymerase II transcription machinery. Mediator is recruited to promoters by direct interactions with regulatory proteins and serves as a scaffold for the assembly of a functional preinitiation complex with RNA polymerase II and the general transcription factors. This is Mediator of RNA polymerase II transcription subunit 2 (MED2) from Eremothecium gossypii (strain ATCC 10895 / CBS 109.51 / FGSC 9923 / NRRL Y-1056) (Yeast).